A 1308-amino-acid chain; its full sequence is Transposon TX1 uncharacterized 149 kDa protein (1308 aa).

The Reverse transcriptase domain maps to 494-765 (EAFKKGELPL…KIIKYLGVYL (272 aa)).

In Xenopus laevis (African clawed frog), this protein is Transposon TX1 uncharacterized 149 kDa protein.